Consider the following 63-residue polypeptide: MAVPKKRTSMSKKRIRKNIWKKKTYFSIVQSYSLVKSRSFSSGNEHPKPKGFSGQQTNNKIFE.

The segment at 39-63 is disordered; that stretch reads SFSSGNEHPKPKGFSGQQTNNKIFE. The segment covering 53-63 has biased composition (polar residues); it reads SGQQTNNKIFE.

The protein belongs to the bacterial ribosomal protein bL32 family.

The protein localises to the plastid. Its subcellular location is the chloroplast. The sequence is that of Large ribosomal subunit protein bL32c from Triticum aestivum (Wheat).